Here is a 271-residue protein sequence, read N- to C-terminus: Coiled-coil domain-containing protein ORF29 (271 aa).

A disordered region spans residues 1–39 (MNEKTESEIFEEQNSLYKPIKQEKKTPSTPESEDKNDQS). Residues 20–37 (IKQEKKTPSTPESEDKND) are compositionally biased toward basic and acidic residues. The stretch at 208-228 (RATQTQEILLNSLRKNLQMLE) forms a coiled coil.

The sequence is that of Coiled-coil domain-containing protein ORF29 from Helicobacter pylori (strain 35A).